We begin with the raw amino-acid sequence, 180 residues long: Inner membrane-spanning protein YciB (180 aa).

The next 5 helical transmembrane spans lie at 25–45, 49–69, 76–96, 118–138, and 150–170; these read QNAT…CYII, VSKL…ITLI, IKIK…MSGI, ITLS…NEIV, and FKVF…LPLL.

The protein belongs to the YciB family.

Its subcellular location is the cell inner membrane. Functionally, plays a role in cell envelope biogenesis, maintenance of cell envelope integrity and membrane homeostasis. This chain is Inner membrane-spanning protein YciB, found in Rickettsia akari (strain Hartford).